The chain runs to 320 residues: Probable cell division protein WhiA (320 aa).

A DNA-binding region (H-T-H motif) is located at residues 276–310 (TLKELGEMVESGKVSKSGVNHRLRKIDELAEKLRA).

Belongs to the WhiA family.

In terms of biological role, involved in cell division and chromosome segregation. In Halalkalibacterium halodurans (strain ATCC BAA-125 / DSM 18197 / FERM 7344 / JCM 9153 / C-125) (Bacillus halodurans), this protein is Probable cell division protein WhiA.